A 981-amino-acid chain; its full sequence is Helicase-like transcription factor CHR28 (981 aa).

Disordered regions lie at residues Met1–Arg66 and Lys112–Glu194. Residues Ser46–Ser65 are compositionally biased toward polar residues. Positions Phe119–Pro128 are enriched in pro residues. Residues His166–Asn176 show a composition bias toward polar residues. A compositionally biased stretch (basic and acidic residues) spans Pro181–Glu194. The Helicase ATP-binding domain maps to Glu241–Asp526. Asp254–Thr261 is a binding site for ATP. Disordered stretches follow at residues Asp293–Asn337 and Val439–Asp462. The span at Val439 to Gly451 shows a compositional bias: basic residues. Residues Cys679–Arg718 form an RING-type; degenerate zinc finger. A compositionally biased stretch (polar residues) spans Asn779–Pro798. The disordered stretch occupies residues Asn779–Asp808. The span at Asn799 to Asp808 shows a compositional bias: acidic residues. The 173-residue stretch at Asp804–Lys976 folds into the Helicase C-terminal domain.

This sequence belongs to the SNF2/RAD54 helicase family. RAD16 subfamily. As to quaternary structure, interacts with SUVR2.

The protein localises to the nucleus. In terms of biological role, probable helicase-like transcription factor involved in transcriptional gene silencing. Associates with SUVR2 and contributes to transcriptional gene silencing at RNA-directed DNA methylation (RdDM) target loci but also at RdDM-independent target loci. May be involved in nucleosome positioning to form ordered nucleosome arrays on chromatin. Associates with SUVR2 and functions redundantly with FRG1. Required for the efficient methylation of a broad range of RdDM target loci. This is Helicase-like transcription factor CHR28 from Arabidopsis thaliana (Mouse-ear cress).